A 264-amino-acid chain; its full sequence is Glutamate racemase (264 aa).

Substrate contacts are provided by residues 10 to 11 (DS) and 42 to 43 (YG). Cys-73 acts as the Proton donor/acceptor in catalysis. Substrate is bound at residue 74–75 (NT). Cys-183 serves as the catalytic Proton donor/acceptor. 184–185 (TH) is a substrate binding site.

This sequence belongs to the aspartate/glutamate racemases family.

The enzyme catalyses L-glutamate = D-glutamate. The protein operates within cell wall biogenesis; peptidoglycan biosynthesis. In terms of biological role, provides the (R)-glutamate required for cell wall biosynthesis. This Streptococcus pyogenes serotype M18 (strain MGAS8232) protein is Glutamate racemase.